A 1460-amino-acid polypeptide reads, in one-letter code: MKFLSATAVFAAALPSITSASSVESQIETKDLNSSRTGSSSSQSFTEIIPENGAEYRVSGDVSFSDFSNIPEEAETLAISHKEQPNNEVVLSEENHQASFQDSAQNQTENASEGNSPNSENTNQSSTTETESITTDEQVQNDNESAASVPTTVETATAMRLPSYHLQTESLVEGATEEDQNQPNSQNTSSGGGAFYNSQQGPLSFINDPDKDSSLTLSKIRVIGEGGAIYSKGPLSITGLKKLALKENLSQKAGGAICAESTISISSVDSIIFSKNTVTPPAANKPELPNDPSGSNGNDGSDDSNSSGNTDSNESNPNNSASNNTGSENELSSSTPSAQLPNPATPFLSSVSTNSQPIDTEPENAWHAESGSGGAIYSKGKLSIASSKEVVFDHNSATKNGGAIFGEEEIALEKIASLKFDSNTTGEKGGAIHAKTVTLSDIKNTLIFVNNTAKTPEENSLKSSQLNNQNPSEEEHQDTSEGEESQSLETSPITNQDSASSHVAIFRSIAASSSQSNSENIPNADGSTSAGGDAGSSSQPSTPGSDSSINHVIGGGAIYGEAVKIENLSGYGTFSNNNAVDHQISGSTSDVLGGAIYAKTSLTIDSGNSSGTITFSENTTSSKSTTGQVAGGAIFSPSVTITTPVTFSKNSAINATTSSKKDTFGGAIGAISTVSLSKGARFSENIADLGSAIGLVPTTQDAETVQLTTGSYYFEKNKALKRATVYAPIVSIKAHTATFDQNISAEEGSAIYFTKEATIESLGSVLFTGNLVTPIQSTTVLTSGNTSKYGAAIFGQIANASGSQTDNLPLKLIASGGNISFRNNEYRPDATNTGQSTFCSIAGDIKLTMQAAEGKVISFFDAIRTSTKKTGTLASAYDTLDINKSNDSGSINSAFTGTIMFSSELHENKSYIPQNVVLHSGSLILKANTELHVLSFDQKEGSSLIMEPGSVLSNQDIADGSLVVNSLTIDLSSVGRNSASGDNIFMPPELRIVDTSTNSGNSSSTPPSSNTPPNSTPTAQAPISKNFAATTTTPTTPPTTGNIVFLNGVIKLIDPNGTFFQNPALGSDQKISLLVLPSDQTKLQAQKVVLTGDISPKKGYTGTLTLDPQQLQNGVIQALWTFKSYRQWAYIPRDNHFYANSILGSQMSMATVKQGLINDKLNLARFDEVAYNNLWISGLGTMLSQRGGQRSEEMTYYSRGASVALDAKPTQDLIIGAAFSKMIGRSKSLKLERNYTHKGSEYSYQASVYGGSPFYLTINKEAGRSLPLLLQGVISYGYIKHDTVTHYPTIRELNKGEWEDLGWLTALRVSSILKTPKQGDSKRITVYGEVEYSSIRQKQFTETEYDPRYFSNCTYRNLAVPVGLALEGEFKGNDILMYNRFSVAYMPSIYRNSPVCKYQVLSSGEGGEIVCGVPTRNSSRAEYSTQLYLGPLWTLYGSYTLEADAHTLANMINCGARMTF.

The signal sequence occupies residues 1–20 (MKFLSATAVFAAALPSITSA). Disordered regions lie at residues 21–48 (SSVESQIETKDLNSSRTGSSSSQSFTEI), 92–212 (SEEN…PDKD), 279–372 (TPPA…ESGS), 455–549 (TPEE…DSSI), and 993–1021 (VDTSTNSGNSSSTPPSSNTPPNSTPTAQA). Residues 34–44 (SSRTGSSSSQS) show a composition bias toward low complexity. The segment covering 97–114 (QASFQDSAQNQTENASEG) has biased composition (polar residues). A compositionally biased stretch (low complexity) spans 115 to 137 (NSPNSENTNQSSTTETESITTDE). Positions 138–155 (QVQNDNESAASVPTTVET) are enriched in polar residues. A compositionally biased stretch (low complexity) spans 290-327 (NDPSGSNGNDGSDDSNSSGNTDSNESNPNNSASNNTGS). Residues 328-358 (ENELSSSTPSAQLPNPATPFLSSVSTNSQPI) are compositionally biased toward polar residues. Residues 461 to 471 (LKSSQLNNQNP) are compositionally biased toward low complexity. Over residues 487 to 501 (SLETSPITNQDSASS) the composition is skewed to polar residues. 2 stretches are compositionally biased toward low complexity: residues 504–548 (AIFR…SDSS) and 995–1018 (TSTNSGNSSSTPPSSNTPPNSTPT). The Autotransporter domain maps to 1167 to 1460 (DEVAYNNLWI…MINCGARMTF (294 aa)).

Belongs to the PMP outer membrane protein family.

It localises to the secreted. Its subcellular location is the cell wall. The protein localises to the cell outer membrane. The polypeptide is Probable outer membrane protein PmpC (pmpC) (Chlamydia muridarum (strain MoPn / Nigg)).